The chain runs to 640 residues: MSQPESYPLLSRIGSPSDLRELPAAELPALAGELRAFLLESVSSTGGHLASNLGTVELTIALHYVFNTPDDRLVWDVGHQSYPHKILTGRREAMPGLRKKGGLAGFPKRAESPYDTFGVGHSSTSISAALGMALAARQLGEDRHAVAIIGDGAMTAGMAFEALNHAGDQKANLLVVLNDNEMSISPNVGAMNNYLARLLSGKVYSTVREGSKRVLDHMPPMREFMRRAEEHMKGMIVPGTLFEELGFNYYGPIDGHDLPSLVKTLKNLRALPGPRLLHVVTRKGHGYAPAEQDPCGYHGVGQFDPSQGLAAGKTPSSPSYTQVFGQWLCDMAEADPRLVGITPAMREGSGLVEFSQRFPERYHDVGIAEQHALTVAAGMACDGLKPVVAIYSTFLQRAYDQLIHDIAIQNLPVLLAIDRAGVVGPDGPTHAGSFDLSYLRCVPNLTVMAPADEDECRRMLSTGFHLDGPAAVRYPRGKGPGAALDPGLDTLPVGKAQLRRKGRGVALLAFGAVLPAALAAAEPLDATVVNMRFVKPLDEALVREMAEGHDLLVTLEDNVVAGGAGSAVAESLAVQGITVPLLHLGLPDRFQEHGSREELLSEAGLDAEGILAAVRARLNDVPSRSGRDDCLSAPTRVISK.

Thiamine diphosphate contacts are provided by residues His-79 and 120 to 122 (GHS). Asp-151 serves as a coordination point for Mg(2+). Thiamine diphosphate-binding positions include 152-153 (GA), Asn-180, Tyr-287, and Glu-369. Asn-180 lines the Mg(2+) pocket.

It belongs to the transketolase family. DXPS subfamily. As to quaternary structure, homodimer. Mg(2+) is required as a cofactor. Requires thiamine diphosphate as cofactor.

It catalyses the reaction D-glyceraldehyde 3-phosphate + pyruvate + H(+) = 1-deoxy-D-xylulose 5-phosphate + CO2. It functions in the pathway metabolic intermediate biosynthesis; 1-deoxy-D-xylulose 5-phosphate biosynthesis; 1-deoxy-D-xylulose 5-phosphate from D-glyceraldehyde 3-phosphate and pyruvate: step 1/1. In terms of biological role, catalyzes the acyloin condensation reaction between C atoms 2 and 3 of pyruvate and glyceraldehyde 3-phosphate to yield 1-deoxy-D-xylulose-5-phosphate (DXP). The sequence is that of 1-deoxy-D-xylulose-5-phosphate synthase from Thioalkalivibrio sulfidiphilus (strain HL-EbGR7).